The primary structure comprises 146 residues: Oxygen-independent coproporphyrinogen III oxidase (146 aa).

Tyr54 lines the S-adenosyl-L-methionine pocket. The [4Fe-4S] cluster site is built by Cys60 and Cys64. Position 66 (Phe66) interacts with S-adenosyl-L-methionine. Cys67 lines the [4Fe-4S] cluster pocket. Residues 111-112 (GT) and Glu143 contribute to the S-adenosyl-L-methionine site.

This sequence belongs to the anaerobic coproporphyrinogen-III oxidase family. In terms of assembly, monomer. The cofactor is [4Fe-4S] cluster.

The protein localises to the cytoplasm. It catalyses the reaction coproporphyrinogen III + 2 S-adenosyl-L-methionine = protoporphyrinogen IX + 2 5'-deoxyadenosine + 2 L-methionine + 2 CO2. The protein operates within porphyrin-containing compound metabolism; protoporphyrin-IX biosynthesis; protoporphyrinogen-IX from coproporphyrinogen-III (AdoMet route): step 1/1. Functionally, involved in the heme biosynthesis. Catalyzes the anaerobic oxidative decarboxylation of propionate groups of rings A and B of coproporphyrinogen III to yield the vinyl groups in protoporphyrinogen IX. This Mannheimia haemolytica (Pasteurella haemolytica) protein is Oxygen-independent coproporphyrinogen III oxidase (hemN).